Here is a 55-residue protein sequence, read N- to C-terminus: ATP synthase F(0) complex subunit 8 (55 aa).

The helical transmembrane segment at 8 to 24 threads the bilayer; that stretch reads PWFSIMVMTWLTLALLI. The disordered stretch occupies residues 35-55; sequence NPPSKKPSLITKPTPWAWPWT.

It belongs to the ATPase protein 8 family. As to quaternary structure, component of the ATP synthase complex composed at least of ATP5F1A/subunit alpha, ATP5F1B/subunit beta, ATP5MC1/subunit c (homooctomer), MT-ATP6/subunit a, MT-ATP8/subunit 8, ATP5ME/subunit e, ATP5MF/subunit f, ATP5MG/subunit g, ATP5MK/subunit k, ATP5MJ/subunit j, ATP5F1C/subunit gamma, ATP5F1D/subunit delta, ATP5F1E/subunit epsilon, ATP5PF/subunit F6, ATP5PB/subunit b, ATP5PD/subunit d, ATP5PO/subunit OSCP. ATP synthase complex consists of a soluble F(1) head domain (subunits alpha(3) and beta(3)) - the catalytic core - and a membrane F(0) domain - the membrane proton channel (subunits c, a, 8, e, f, g, k and j). These two domains are linked by a central stalk (subunits gamma, delta, and epsilon) rotating inside the F1 region and a stationary peripheral stalk (subunits F6, b, d, and OSCP).

The protein resides in the mitochondrion membrane. Subunit 8, of the mitochondrial membrane ATP synthase complex (F(1)F(0) ATP synthase or Complex V) that produces ATP from ADP in the presence of a proton gradient across the membrane which is generated by electron transport complexes of the respiratory chain. ATP synthase complex consist of a soluble F(1) head domain - the catalytic core - and a membrane F(1) domain - the membrane proton channel. These two domains are linked by a central stalk rotating inside the F(1) region and a stationary peripheral stalk. During catalysis, ATP synthesis in the catalytic domain of F(1) is coupled via a rotary mechanism of the central stalk subunits to proton translocation. In vivo, can only synthesize ATP although its ATP hydrolase activity can be activated artificially in vitro. Part of the complex F(0) domain. The polypeptide is ATP synthase F(0) complex subunit 8 (Anas platyrhynchos (Mallard)).